The primary structure comprises 1171 residues: DNA-directed RNA polymerase subunit beta (1171 aa).

The protein belongs to the RNA polymerase beta chain family. The RNAP catalytic core consists of 2 alpha, 1 beta, 1 beta' and 1 omega subunit. When a sigma factor is associated with the core the holoenzyme is formed, which can initiate transcription.

It carries out the reaction RNA(n) + a ribonucleoside 5'-triphosphate = RNA(n+1) + diphosphate. DNA-dependent RNA polymerase catalyzes the transcription of DNA into RNA using the four ribonucleoside triphosphates as substrates. The polypeptide is DNA-directed RNA polymerase subunit beta (Kineococcus radiotolerans (strain ATCC BAA-149 / DSM 14245 / SRS30216)).